A 198-amino-acid polypeptide reads, in one-letter code: 7-methyl-GTP pyrophosphatase (198 aa).

D69 acts as the Proton acceptor in catalysis.

This sequence belongs to the Maf family. YceF subfamily. A divalent metal cation is required as a cofactor.

It is found in the cytoplasm. It carries out the reaction N(7)-methyl-GTP + H2O = N(7)-methyl-GMP + diphosphate + H(+). In terms of biological role, nucleoside triphosphate pyrophosphatase that hydrolyzes 7-methyl-GTP (m(7)GTP). May have a dual role in cell division arrest and in preventing the incorporation of modified nucleotides into cellular nucleic acids. This is 7-methyl-GTP pyrophosphatase from Yersinia pseudotuberculosis serotype I (strain IP32953).